Reading from the N-terminus, the 907-residue chain is MTQLTVKALSEEIGTPVDRLLEQLADAGMKKSSSDQVSDEEKQKLLTHLKKEHGDTSGDAEPTRLTLQRKTRSTLSVNAGGGKSKDVQIEVRKKRTYVKRSAIEDEAKREAEEAAQREAEEAAKRAAEEAAKREAEEAAKREAEEKAKREAEEAAKREAEKSVDRDAEEKAKRDAEGKAKRDAEEKVKQEAARKEAEELKRRQEEEAKRKAEEESQRKLEEAREMAEKNKERWSAAEENKGDMEDTDYHVTTSQYAREAEDEADRKEEEARRRKKKTKSSAKASENDERGGPRVQRGGKGGRKGKLSKPKSMQHGFDKSAVVAKSDVVIGETIVVSELANKMSVKATEVIKIMMKMGAMATINQVIDQETAQLVAEEMGHKVVLRKENELEEAVLSDRDNMFEAVPRAPVVTIMGHVDHGKTSTLDYIRRTHVASGEAGGITQHIGAYHVETENGMITFLDTPGHAAFTAMRARGAQATDIVVLVVAADDGVMPQTVEAIQHAKAAGVPLIVAVNKIDKEEANPDNVKNELSQYNVMPEEWGGENMFVHISAKQGTNIDQLLETILLQAEVLELTAVKDGMASGVVVESRLDKGRGPVATVLVQSGTLRKGDIVLCGQEYGRVRAMRDEIGNEVNEAGPSIPVEILGLSGVPAAGDEATVVRDERKAREVANYRAGKFREVKLARQQKSKLENMFSNMAAGDVAELNIVLKADVQGSVEAIADSLTKLSTEEVKVNIVGSGVGGITETDAVLAEASNAIILGFNVRADASARRAIEAASIDLRYYSIIYQLIDEVKQAMSGMLAPEFKQEIIGLAEVRDVFKSPKLGAIAGCMVTEGLIKRNAPIRVLRDNVVIYEGELESLRRFKDDVAEVKNGYECGIGVKNYNDVRVGDQIEVFETIEIKRTID.

Positions 26 to 317 are disordered; it reads DAGMKKSSSD…KPKSMQHGFD (292 aa). Basic and acidic residues-rich tracts occupy residues 28–44 and 101–248; these read GMKK…EKQK and SAIE…DTDY. A compositionally biased stretch (basic residues) spans 299-308; it reads KGGRKGKLSK. The tr-type G domain occupies 406-575; that stretch reads PRAPVVTIMG…LLQAEVLELT (170 aa). Positions 415–422 are G1; sequence GHVDHGKT. 415–422 serves as a coordination point for GTP; it reads GHVDHGKT. Residues 440–444 are G2; sequence GITQH. The G3 stretch occupies residues 461–464; the sequence is DTPG. GTP-binding positions include 461 to 465 and 515 to 518; these read DTPGH and NKID. The G4 stretch occupies residues 515 to 518; that stretch reads NKID. Residues 551–553 form a G5 region; that stretch reads SAK.

Belongs to the TRAFAC class translation factor GTPase superfamily. Classic translation factor GTPase family. IF-2 subfamily.

The protein resides in the cytoplasm. In terms of biological role, one of the essential components for the initiation of protein synthesis. Protects formylmethionyl-tRNA from spontaneous hydrolysis and promotes its binding to the 30S ribosomal subunits. Also involved in the hydrolysis of GTP during the formation of the 70S ribosomal complex. The polypeptide is Translation initiation factor IF-2 (Vibrio vulnificus (strain CMCP6)).